The sequence spans 275 residues: Catechol 1,2-dioxygenase 2 (275 aa).

Fe cation is bound by residues tyrosine 158, tyrosine 192, histidine 216, and histidine 218.

The protein belongs to the intradiol ring-cleavage dioxygenase family. Homodimer. It depends on Fe(3+) as a cofactor.

It catalyses the reaction catechol + O2 = cis,cis-muconate + 2 H(+). It functions in the pathway aromatic compound metabolism; beta-ketoadipate pathway; 5-oxo-4,5-dihydro-2-furylacetate from catechol: step 1/3. Can cleave 4-methyl-, 4-chloro-, and 3-methoxycatechol at lower rates than catechol, but has no activity with 4-nitrocatechol or protocatechuic acid. This Acinetobacter lwoffii protein is Catechol 1,2-dioxygenase 2 (catA2).